The sequence spans 1500 residues: Copper-transporting ATPase 1 (1500 aa).

Over 1 to 653 the chain is Cytoplasmic; the sequence is MDPSMGVNSV…KREIRQWRRS (653 aa). 2 consecutive HMA domains span residues 8–74 and 85–151; these read NSVT…FDAV and TDTL…LDTG. Thr-18, Cys-19, and Cys-22 together coordinate Cu(+). Thr-152 is subject to Phosphothreonine. Positions 171–237 constitute an HMA 3 domain; it reads VVLKMKVEGM…QIEAMGFPAF (67 aa). 2 residues coordinate Cu(+): Cys-182 and Cys-185. Ser-270 bears the Phosphoserine mark. Positions 277 to 343 constitute an HMA 4 domain; sequence STATFIIDGM…AIEAVSPGLY (67 aa). Cu(+) contacts are provided by Cys-288 and Cys-291. Thr-327 bears the Phosphothreonine mark. Residues Ser-339, Ser-353, Ser-357, and Ser-362 each carry the phosphoserine modification. HMA domains follow at residues 377–443, 488–554, and 564–630; these read QETV…FDAT, SKCY…FGAT, and GVLE…FEAS. Residues Cys-388, Cys-391, Cys-499, Cys-502, Cys-575, and Cys-578 each coordinate Cu(+). The helical transmembrane segment at 654 to 675 threads the bilayer; sequence FLVSLFFCIPVMGLMIYMMVMD. At 676-714 the chain is on the extracellular side; it reads HHFATLHHNQNMSKEEMINLHSSMFLERQILPGLSVMNL. Residue Asn-686 is glycosylated (N-linked (GlcNAc...) asparagine). A helical transmembrane segment spans residues 715 to 734; it reads LSFLLCVPVQFFGGWYFYIQ. Topologically, residues 735–741 are cytoplasmic; it reads AYKALKH. The helical transmembrane segment at 742 to 762 threads the bilayer; the sequence is KTANMDVLIVLATTIAFAYSL. At 763–781 the chain is on the extracellular side; the sequence is IILLVAMYERAKVNPITFF. The chain crosses the membrane as a helical span at residues 782–802; sequence DTPPMLFVFIALGRWLEHIAK. Residues 803–936 are Cytoplasmic-facing; sequence GKTSEALAKL…KAPIQQFADK (134 aa). The chain crosses the membrane as a helical span at residues 937–959; that stretch reads LSGYFVPFIVFVSIATLLVWIVI. Residues 960–989 are Extracellular-facing; that stretch reads GFLNFEIVETYFPGYNRSISRTETIIRFAF. N-linked (GlcNAc...) asparagine glycosylation occurs at Asn-975. A helical transmembrane segment spans residues 990-1011; the sequence is QASITVLCIACPCSLGLATPTA. Residues 1012–1356 are Cytoplasmic-facing; it reads VMVGTGVGAQ…LSRKTVKRIR (345 aa). Asp-1044 functions as the 4-aspartylphosphate intermediate in the catalytic mechanism. Glu-1081 is an ATP binding site. The residue at position 1212 (Thr-1212) is a Phosphothreonine. Residues Asp-1301 and Asp-1305 each contribute to the Mg(2+) site. A helical transmembrane segment spans residues 1357–1374; that stretch reads INFVFALIYNLVGIPIAA. The Extracellular segment spans residues 1375–1385; the sequence is GVFMPIGLVLQ. Residues 1386-1405 form a helical membrane-spanning segment; it reads PWMGSAAMAASSVSVVLSSL. The Cytoplasmic portion of the chain corresponds to 1406–1500; sequence FLKLYRKPTY…DFREDDDTAL (95 aa). Phosphoserine is present on residues Ser-1430, Ser-1432, Ser-1460, Ser-1463, and Ser-1466. The short motif at 1467 to 1468 is the Endocytosis signal element; sequence LL. Ser-1469, Ser-1473, Ser-1476, and Ser-1486 each carry phosphoserine. The PDZD11-binding stretch occupies residues 1486–1500; that stretch reads SLLVGDFREDDDTAL. The Endocytosis signal signature appears at 1487–1488; sequence LL.

Belongs to the cation transport ATPase (P-type) (TC 3.A.3) family. Type IB subfamily. As to quaternary structure, monomer. Interacts with PDZD11. Interacts with ATOX1 and COMMD1. Interacts with TYRP1. Directly interacts with SOD3; this interaction is copper-dependent and is required for SOD3 activity. In terms of tissue distribution, widely expressed including in heart, brain, lung, muscle, kidney, pancreas, and to a lesser extent placenta. Expressed in fibroblasts, aortic smooth muscle cells, aortic endothelial cells and umbilical vein endothelial cells (at protein level). Expressed in cerebellum and brain cortex.

It is found in the golgi apparatus. It localises to the trans-Golgi network membrane. The protein localises to the cell membrane. The protein resides in the melanosome membrane. Its subcellular location is the early endosome membrane. It is found in the cell projection. It localises to the axon. The protein localises to the dendrite. The protein resides in the postsynaptic density. Its subcellular location is the cytoplasm. It is found in the cytosol. It localises to the endoplasmic reticulum. It carries out the reaction Cu(+)(in) + ATP + H2O = Cu(+)(out) + ADP + phosphate + H(+). Its function is as follows. ATP-driven copper (Cu(+)) ion pump that plays an important role in intracellular copper ion homeostasis. Within a catalytic cycle, acquires Cu(+) ion from donor protein on the cytoplasmic side of the membrane and delivers it to acceptor protein on the lumenal side. The transfer of Cu(+) ion across the membrane is coupled to ATP hydrolysis and is associated with a transient phosphorylation that shifts the pump conformation from inward-facing to outward-facing state. Under physiological conditions, at low cytosolic copper concentration, it is localized at the trans-Golgi network (TGN) where it transfers Cu(+) ions to cuproenzymes of the secretory pathway. Upon elevated cytosolic copper concentrations, it relocalizes to the plasma membrane where it is responsible for the export of excess Cu(+) ions. May play a dual role in neuron function and survival by regulating cooper efflux and neuronal transmission at the synapse as well as by supplying Cu(+) ions to enzymes such as PAM, TYR and SOD3. In the melanosomes of pigmented cells, provides copper cofactor to TYR to form an active TYR holoenzyme for melanin biosynthesis. This is Copper-transporting ATPase 1 from Homo sapiens (Human).